The sequence spans 476 residues: Siroheme synthase (476 aa).

The precorrin-2 dehydrogenase /sirohydrochlorin ferrochelatase stretch occupies residues 1 to 207; that stretch reads MTANALFPLF…QRHAEAEAVL (207 aa). Residues 25 to 26 and 46 to 47 contribute to the NAD(+) site; these read KV and PS. A Phosphoserine modification is found at serine 132. Positions 220–476 are uroporphyrinogen-III C-methyltransferase; the sequence is GSVTLVGAGA…SAPCPPARIL (257 aa). Aspartate 252 serves as the catalytic Proton acceptor. Lysine 274 acts as the Proton donor in catalysis. S-adenosyl-L-methionine is bound by residues 305–307, valine 310, 335–336, methionine 387, and glycine 416; these read GGD and TA.

This sequence in the N-terminal section; belongs to the precorrin-2 dehydrogenase / sirohydrochlorin ferrochelatase family. In the C-terminal section; belongs to the precorrin methyltransferase family.

The enzyme catalyses uroporphyrinogen III + 2 S-adenosyl-L-methionine = precorrin-2 + 2 S-adenosyl-L-homocysteine + H(+). The catalysed reaction is precorrin-2 + NAD(+) = sirohydrochlorin + NADH + 2 H(+). It carries out the reaction siroheme + 2 H(+) = sirohydrochlorin + Fe(2+). Its pathway is cofactor biosynthesis; adenosylcobalamin biosynthesis; precorrin-2 from uroporphyrinogen III: step 1/1. It participates in cofactor biosynthesis; adenosylcobalamin biosynthesis; sirohydrochlorin from precorrin-2: step 1/1. The protein operates within porphyrin-containing compound metabolism; siroheme biosynthesis; precorrin-2 from uroporphyrinogen III: step 1/1. It functions in the pathway porphyrin-containing compound metabolism; siroheme biosynthesis; siroheme from sirohydrochlorin: step 1/1. Its pathway is porphyrin-containing compound metabolism; siroheme biosynthesis; sirohydrochlorin from precorrin-2: step 1/1. Its function is as follows. Multifunctional enzyme that catalyzes the SAM-dependent methylations of uroporphyrinogen III at position C-2 and C-7 to form precorrin-2 via precorrin-1. Then it catalyzes the NAD-dependent ring dehydrogenation of precorrin-2 to yield sirohydrochlorin. Finally, it catalyzes the ferrochelation of sirohydrochlorin to yield siroheme. In Xylella fastidiosa (strain M12), this protein is Siroheme synthase.